The chain runs to 302 residues: Riboflavin transporter (302 aa).

A run of 8 helical transmembrane segments spans residues A16–V36, L44–L64, V87–W107, A109–G129, I158–I178, I191–A213, G227–A247, and G264–L284. EamA domains follow at residues F30–L151 and L170–M291.

The protein belongs to the drug/metabolite transporter (DMT) superfamily. 10 TMS drug/metabolite exporter (DME) (TC 2.A.7.3) family.

The protein localises to the cell membrane. Its function is as follows. Transports riboflavin into the cell. Can also transport FMN and FAD. Required for normal nodule development during colonization of pea plant roots. This Rhizobium johnstonii (strain DSM 114642 / LMG 32736 / 3841) (Rhizobium leguminosarum bv. viciae) protein is Riboflavin transporter.